Reading from the N-terminus, the 878-residue chain is Glycogen [starch] synthase (878 aa).

K61 is a binding site for UDP-alpha-D-glucose. 2 disordered regions span residues 637–721 and 746–878; these read PPKP…NVIP and NEFK…KSLK. Low complexity-rich tracts occupy residues 641–656 and 666–676; these read ISRSPSPSPSSSLKLS and QQQQQQQQPQP. The span at 677-692 shows a compositional bias: polar residues; it reads IGTTINLIPPSSNVSV. Composition is skewed to low complexity over residues 693–715, 746–781, 795–830, and 838–878; these read TPTTTPTTTTTATTATTAPITTP, NEFKKQQQQQQQSKTPTTPTTTSTTTTTPSTTAAAT, PNTSSFIPTNKGSTATTTTTTATPTPTPSNNTNGKP, and TKSN…KSLK.

Belongs to the glycosyltransferase 3 family.

It carries out the reaction [(1-&gt;4)-alpha-D-glucosyl](n) + UDP-alpha-D-glucose = [(1-&gt;4)-alpha-D-glucosyl](n+1) + UDP + H(+). It participates in glycan biosynthesis; glycogen biosynthesis. Catalyzes the formation of apha-1,4 glycosidic bonds adding glucose residue from UDPG to the growing chain of glycogen. This chain is Glycogen [starch] synthase (glcS), found in Dictyostelium discoideum (Social amoeba).